We begin with the raw amino-acid sequence, 431 residues long: Saglin (431 aa).

The signal sequence occupies residues 1–39 (MSVRDYSGVQVISSRKHRSMSRLPTVLLLLASAAVLAAG). An N-linked (GlcNAc...) asparagine glycan is attached at Asn95. A coiled-coil region spans residues 120 to 169 (LDDAQRQMEQEHRQYAATLEEQLHAAQQETQQEQEMKKALQKQLDALTDS).

As to quaternary structure, homodimer. Female salivary gland (at protein level). Not detected in female carcass without salivary glands, midgut and hemolymph (at protein level). Probably not expressed in male tissues.

It localises to the secreted. (Microbial infection) Facilitates efficient midgut colonization by Plasmodium berghei parasites. Promotes successful transmission of Plasmodium berghei at low infection densities. Functionally, (Microbial infection) Facilitates efficient midgut colonization by Plasmodium falciparum. This Anopheles coluzzii (African malaria mosquito) protein is Saglin.